The following is a 184-amino-acid chain: Photosystem I assembly protein Ycf4 (184 aa).

A run of 2 helical transmembrane segments spans residues F22–S42 and I64–I84.

This sequence belongs to the Ycf4 family.

Its subcellular location is the plastid. It is found in the chloroplast thylakoid membrane. In terms of biological role, seems to be required for the assembly of the photosystem I complex. This chain is Photosystem I assembly protein Ycf4, found in Huperzia lucidula (Shining clubmoss).